The primary structure comprises 132 residues: Succinate dehydrogenase cytochrome b560 subunit (132 aa).

Helical transmembrane passes span 32 to 49 (LYLV…KFLF) and 59 to 81 (KFVK…FSMY). Histidine 86 contacts heme. Residues 107–127 (VTMSTKLSLSLSLVLVLINCL) form a helical membrane-spanning segment.

It belongs to the cytochrome b560 family. As to quaternary structure, forms part of complex II containing four subunits: a 70 kDa flavoprotein (FP), a 27 kDa iron-sulfur protein (IP), a cytochrome B and a membrane-anchoring protein. Requires heme as cofactor.

Its subcellular location is the mitochondrion inner membrane. It functions in the pathway carbohydrate metabolism; tricarboxylic acid cycle. Its function is as follows. Membrane-anchoring subunit of succinate dehydrogenase (SDH) that is involved in complex II of the mitochondrial electron transport chain and is responsible for transferring electrons from succinate to ubiquinone (coenzyme Q). This is Succinate dehydrogenase cytochrome b560 subunit (SDH3) from Cyanidium caldarium (Red alga).